The following is a 1327-amino-acid chain: Putative ATP-dependent RNA helicase ucp12 (1327 aa).

2 disordered regions span residues 1-58 (MGSK…KQLV) and 201-222 (QAAR…NEKV). The segment covering 18 to 41 (SKNKEKNIKGKKKNSLDPIEKNKQ) has biased composition (basic and acidic residues). Positions 42 to 58 (ETAGLQTTSRPTAKQLV) are enriched in polar residues. The 40-residue stretch at 276–315 (EPDTSIVNDLISLGFRDIHAKEACQYCVSLEDALEWLIIH) folds into the UBA domain. The RWD domain maps to 405-504 (DDVSALQSIL…NHLQENIEDF (100 aa)). Positions 587 to 756 (MDAIQHSQVV…FGNAGHLHIH (170 aa)) constitute a Helicase ATP-binding domain. ATP is bound at residue 600–607 (GETGSGKS). The DEAH box motif lies at 703–706 (DEVH). Residues 797-968 (LISRLVSSID…QVCLNVVPLV (172 aa)) enclose the Helicase C-terminal domain.

This sequence belongs to the DEAD box helicase family. DEAH subfamily.

It localises to the cytoplasm. The catalysed reaction is ATP + H2O = ADP + phosphate + H(+). In terms of biological role, probable ATP-binding RNA helicase. The sequence is that of Putative ATP-dependent RNA helicase ucp12 (ucp12) from Schizosaccharomyces pombe (strain 972 / ATCC 24843) (Fission yeast).